A 199-amino-acid chain; its full sequence is ATP-dependent Clp protease proteolytic subunit (199 aa).

Ser-102 serves as the catalytic Nucleophile. His-127 is a catalytic residue.

This sequence belongs to the peptidase S14 family. Component of the chloroplastic Clp protease core complex.

The protein localises to the plastid. Its subcellular location is the chloroplast stroma. The enzyme catalyses Hydrolysis of proteins to small peptides in the presence of ATP and magnesium. alpha-casein is the usual test substrate. In the absence of ATP, only oligopeptides shorter than five residues are hydrolyzed (such as succinyl-Leu-Tyr-|-NHMec, and Leu-Tyr-Leu-|-Tyr-Trp, in which cleavage of the -Tyr-|-Leu- and -Tyr-|-Trp bonds also occurs).. Cleaves peptides in various proteins in a process that requires ATP hydrolysis. Has a chymotrypsin-like activity. Plays a major role in the degradation of misfolded proteins. The sequence is that of ATP-dependent Clp protease proteolytic subunit from Physcomitrium patens (Spreading-leaved earth moss).